The chain runs to 502 residues: Neuronal acetylcholine receptor subunit alpha-7 (502 aa).

The first 22 residues, 1–22 (MRCSPGGVWLALAASLLHVSLQ), serve as a signal peptide directing secretion. Residues 23-233 (GEFQRKLYKE…VTMRRRTLYY (211 aa)) lie on the Extracellular side of the membrane. Ca(2+)-binding residues include Arg42 and Val44. Asn46, Asn90, and Asn133 each carry an N-linked (GlcNAc...) asparagine glycan. Cysteines 150 and 164 form a disulfide. Ca(2+)-binding residues include Ser172 and Tyr210. Residues Cys212 and Cys213 are joined by a disulfide bond. 3 helical membrane-spanning segments follow: residues 234–254 (GLNL…VFLL), 259–279 (GEKI…MLLV), and 292–315 (LIAQ…VIVL). The segment at 260–267 (EKISLGIT) is essential for TMEM35A/NACHO-mediated proper subunit assembly and trafficking to cell membrane. Residues 316–466 (QYHHHDPDGG…CSEWKFAACV (151 aa)) lie on the Cytoplasmic side of the membrane. A helical membrane pass occupies residues 467 to 489 (VDRLCLMAFSVFTIICTIGILMS).

Belongs to the ligand-gated ion channel (TC 1.A.9) family. Acetylcholine receptor (TC 1.A.9.1) subfamily. Alpha-7/CHRNA7 sub-subfamily. In terms of assembly, homopentamer. Can also form heteropentamers with CHRNB2, mainly found in basal forebrain cholinergic neurons. Interacts with RIC3; which is required for proper folding and assembly. Interacts with LYPD6. Interacts with CANX. In terms of processing, glycosylations at Asn-46, Asn-90 and Asn-133 are essential for TMEM35A/NACHO-mediated proper subunit assembly and trafficking to the cell membrane. As to expression, expressed in neuronal cells. Expressed in macrophages (at protein level).

Its subcellular location is the postsynaptic cell membrane. It localises to the cell membrane. The enzyme catalyses Ca(2+)(in) = Ca(2+)(out). It carries out the reaction K(+)(in) = K(+)(out). It catalyses the reaction Na(+)(in) = Na(+)(out). The catalysed reaction is choline(out) = choline(in). The enzyme catalyses NH4(+)(in) = NH4(+)(out). It carries out the reaction L-arginine(in) = L-arginine(out). It catalyses the reaction guanidine(out) = guanidine(in). With respect to regulation, activated by a myriad of ligands such as acetylcholine, cytisine, nicotine, choline and epibatidine. Oligomeric amyloid-beta protein 42 activates specifially CHRNA7:CHRNB2 nAchRs. Activity is modulated by positive allosteric modulators (PAMs), such as flavonoids, with a wide range of chemical diversity, pharmacological sensitivity and efficacy. AChR activity is inhibited by the antagonists alpha-conotoxons RgIA, ImI and ImII, small disulfide-constrained peptides from cone snails. Alpha-conotoxin PnIC selectively inhibits CHRNA7:CHRNB2 over CHRNA7 homopentamer. Component of neuronal acetylcholine receptors (nAChRs) that function as pentameric, ligand-gated cation channels with high calcium permeability among other activities. nAChRs are excitatory neurotrasnmitter receptors formed by a collection of nAChR subunits known to mediate synaptic transmission in the nervous system and the neuromuscular junction. Each nAchR subunit confers differential attributes to channel properties, including activation, deactivation and desensitization kinetics, pH sensitivity, cation permeability, and binding to allosteric modulators. CHRNA7 forms homopentameric neuronal acetylcholine receptors abundantly expressed in the central nervous system, characterized by fast desensitization and high calcium permeability. Also forms heteropentamers with CHRNB2, mainly expressed in basal forebrain cholinergic neurons. Involved in the modulation of calcium-dependent signaling pathways and influences the release of neurotransmitters, including dopamine, glutamate and GABA. Also expressed in non-neuronal cells such as immune cells like lymphocytes, monocytes and macrophages. In T cells, activation induces metabotropic signaling that results in an increase of intracellular Ca2+ concentrations, independent of ionotropic receptor functions. In macrophages, required for acetylcholine-mediated inhibition of TNF and other inflammatory cytokine release. Once activated by acetylcholine, nicotine or other agonists, selectively inhibits production of pro-inflammatory cytokines while leaving anti-inflammatory cytokines undisturbed. Stimulates the cholinergic anti-inflammatory pathway, controlling inflammation by inhibiting NFKB nuclear translocation and activating the JAK2-STAT3 pathway, independently of ion channel activity. Also expressed in the urothelium where it modulates reflex bladder activity by increasing intracellular calcium through internal stores and decreasing basal ATP release. The chain is Neuronal acetylcholine receptor subunit alpha-7 from Homo sapiens (Human).